Consider the following 262-residue polypeptide: Indole-3-glycerol phosphate synthase (262 aa).

It belongs to the TrpC family.

The catalysed reaction is 1-(2-carboxyphenylamino)-1-deoxy-D-ribulose 5-phosphate + H(+) = (1S,2R)-1-C-(indol-3-yl)glycerol 3-phosphate + CO2 + H2O. It functions in the pathway amino-acid biosynthesis; L-tryptophan biosynthesis; L-tryptophan from chorismate: step 4/5. The polypeptide is Indole-3-glycerol phosphate synthase (Dechloromonas aromatica (strain RCB)).